Here is a 286-residue protein sequence, read N- to C-terminus: Putative sensory transducer protein YfmS (286 aa).

In terms of domain architecture, Methyl-accepting transducer spans 68-286; it reads ITDAIRSNQK…KMAEKALEEE (219 aa).

This sequence belongs to the methyl-accepting chemotaxis (MCP) protein family.

Its function is as follows. Chemotactic-signal transducers respond to changes in the concentration of attractants and repellents in the environment, transduce a signal from the outside to the inside of the cell, and facilitate sensory adaptation through the variation of the level of methylation. Attractants increase the level of methylation while repellents decrease the level of methylation. The chain is Putative sensory transducer protein YfmS (yfmS) from Bacillus subtilis (strain 168).